Reading from the N-terminus, the 719-residue chain is Probable disease resistance protein At4g14610 (719 aa).

Positions 25–73 (SLPENLAALQKAIEVLKTKHDDVKRRVDKEEFLGRRHRLSQVQVEIERL) form a coiled coil. The NB-ARC domain occupies 114 to 418 (EENLVAQVEE…NELEKILGCP (305 aa)). 156-163 (GMGGVGKT) lines the ATP pocket. 3 LRR repeats span residues 400–421 (AVRRMSLMKNELEKILGCPTCP), 422–444 (QLTTLLLQKNHKLVNISGEFFRF), and 447–469 (NLVVLDLSWNSSLTGLPKKISEV).

It belongs to the disease resistance NB-LRR family.

Probable disease resistance protein. The polypeptide is Probable disease resistance protein At4g14610 (Arabidopsis thaliana (Mouse-ear cress)).